The chain runs to 150 residues: Large ribosomal subunit protein uL15 (150 aa).

The interval 1 to 55 is disordered; it reads MADNEILQMHDLKPAPGAKKDRTRVGRGEGSKGKTAGRGAKGQTKRNHVRPGFEG. The segment covering 8–32 has biased composition (basic and acidic residues); it reads QMHDLKPAPGAKKDRTRVGRGEGSK.

It belongs to the universal ribosomal protein uL15 family. Part of the 50S ribosomal subunit.

Its function is as follows. Binds to the 23S rRNA. This Bifidobacterium longum (strain DJO10A) protein is Large ribosomal subunit protein uL15.